The following is a 344-amino-acid chain: Follistatin (344 aa).

An N-terminal signal peptide occupies residues 1 to 29 (MARPRHQPGGLCLLLLLLCQFMEDRSAQA). In terms of domain architecture, TB spans 30–103 (GNCWLRQAKN…TCENVDCGPG (74 aa)). 18 cysteine pairs are disulfide-bonded: Cys32–Cys55, Cys42–Cys88, Cys56–Cys91, Cys95–Cys106, Cys100–Cys116, Cys118–Cys150, Cys122–Cys143, Cys132–Cys164, Cys168–Cys179, Cys173–Cys189, Cys192–Cys225, Cys196–Cys218, Cys207–Cys239, Cys245–Cys256, Cys250–Cys267, Cys270–Cys302, Cys274–Cys295, and Cys284–Cys316. Residues 94–117 (TCENVDCGPGKKCRMNKKNKPRCV) form the Follistatin-like 1 domain. Residues 112-166 (NKPRCVCAPDCSNITWKGLVCGLDGKTYRNECALLKARCKEQPELQVQYQGKCKK) enclose the Kazal-like 1 domain. N-linked (GlcNAc...) asparagine glycosylation occurs at Asn124. The Follistatin-like 2 domain occupies 167–190 (TCRDVFCPGSSTCVVDQTNNAYCV). In terms of domain architecture, Kazal-like 2 spans 186–241 (NAYCVTCNRICPEPTSSEQYLCGNDGVTYPSACHLRKATCLLGRSIGLAYEGKCIK). In terms of domain architecture, Follistatin-like 3 spans 244–268 (SCDDIQCTGGKKCLWDFKVGRGRCS). One can recognise a Kazal-like 3 domain in the interval 261 to 318 (KVGRGRCSLCGELCPESKSEEPVCASDNATYASECAMKEAACSSGVLLEVKHSGSCNS). Asn288 carries an N-linked (GlcNAc...) asparagine glycan. The interval 316–344 (CNSISEDTEDEEEDEDQDYSFPISSILEW) is disordered. Residues 321–333 (EDTEDEEEDEDQD) are compositionally biased toward acidic residues.

Monomer.

It localises to the secreted. In terms of biological role, binds directly to activin and functions as an activin antagonist. Specific inhibitor of the biosynthesis and secretion of pituitary follicle stimulating hormone (FSH). The sequence is that of Follistatin from Bubalus bubalis (Domestic water buffalo).